Here is a 523-residue protein sequence, read N- to C-terminus: 2-isopropylmalate synthase (523 aa).

Residues 5-267 (VIIFDTTLRD…ETGINAKEIH (263 aa)) form the Pyruvate carboxyltransferase domain. Mn(2+)-binding residues include aspartate 14, histidine 202, histidine 204, and asparagine 238. The regulatory domain stretch occupies residues 392 to 523 (GLQQLVVHSD…KQARTELGGV (132 aa)).

The protein belongs to the alpha-IPM synthase/homocitrate synthase family. LeuA type 1 subfamily. Homodimer. The cofactor is Mn(2+).

Its subcellular location is the cytoplasm. The catalysed reaction is 3-methyl-2-oxobutanoate + acetyl-CoA + H2O = (2S)-2-isopropylmalate + CoA + H(+). Its pathway is amino-acid biosynthesis; L-leucine biosynthesis; L-leucine from 3-methyl-2-oxobutanoate: step 1/4. Its function is as follows. Catalyzes the condensation of the acetyl group of acetyl-CoA with 3-methyl-2-oxobutanoate (2-ketoisovalerate) to form 3-carboxy-3-hydroxy-4-methylpentanoate (2-isopropylmalate). This chain is 2-isopropylmalate synthase, found in Shewanella loihica (strain ATCC BAA-1088 / PV-4).